The following is a 563-amino-acid chain: Ataxin-10 homolog (563 aa).

Residue threonine 433 is modified to Phosphothreonine. The interval 544–563 (VSKEEDPGNENSEIISIDED) is disordered. Position 559 is a phosphoserine (serine 559).

It belongs to the ataxin-10 family.

The protein resides in the cytoplasm. Its function is as follows. May play a role in the regulation of cytokinesis. This Saccharomyces cerevisiae (strain ATCC 204508 / S288c) (Baker's yeast) protein is Ataxin-10 homolog (CTR86).